The primary structure comprises 602 residues: MNGGAERAMRSLPSLGGLALLCCAAAAAAAAVASAASAGNVTGGGGAAGQVDASPGPGLRGEPSHPFPRATAPTAQAPRTGPPRATVHRPLAATSPAQSPETTPLWATAGPSSTTFQAPLGPSPTTPPAAERTSTTSQAPTRPAPTTLSTTTGPAPTTPVATTVPAPTTPRTPTPDLPSSSNSSVLPTPPATEAPSSPPPEYVCNCSVVGSLNVNRCNQTTGQCECRPGYQGLHCETCKEGFYLNYTSGLCQPCDCSPHGALSIPCNSSGKCQCKVGVIGSICDRCQDGYYGFSKNGCLPCQCNNRSASCDALTGACLNCQENSKGNHCEECKEGFYQSPDATKECLRCPCSAVTSTGSCSIKSSELEPECDQCKDGYIGPNCNKCENGYYNFDSICRKCQCHGHVDPVKTPKICKPESGECINCLHNTTGFWCENCLEGYVHDLEGNCIKKEVILPTPEGSTILVSNASLTTSVPTPVINSTFTPTTLQTIFSVSTSENSTSALADVSWTQFNIIILTVIIIVVVLLMGFVGAVYMYREYQNRKLNAPFWTIELKEDNISFSSYHDSIPNADVSGLLEDDGNEVAPNGQLTLTTPIHNYKA.

The N-terminal stretch at 1–30 is a signal peptide; it reads MNGGAERAMRSLPSLGGLALLCCAAAAAAA. At 31 to 514 the chain is on the extracellular side; sequence AVASAASAGN…LADVSWTQFN (484 aa). Residues 38 to 199 are disordered; that stretch reads AGNVTGGGGA…PATEAPSSPP (162 aa). N-linked (GlcNAc...) asparagine glycosylation occurs at asparagine 40. 2 stretches are compositionally biased toward low complexity: residues 68-85 and 139-166; these read PRAT…PPRA and APTR…TVPA. The segment covering 167-176 has biased composition (pro residues); that stretch reads PTTPRTPTPD. Asparagine 182 carries N-linked (GlcNAc...) asparagine glycosylation. Positions 187–199 are enriched in pro residues; sequence PTPPATEAPSSPP. Cystine bridges form between cysteine 204-cysteine 217, cysteine 206-cysteine 224, cysteine 226-cysteine 235, cysteine 238-cysteine 251, cysteine 254-cysteine 266, cysteine 256-cysteine 272, cysteine 274-cysteine 283, cysteine 286-cysteine 298, cysteine 301-cysteine 310, cysteine 303-cysteine 317, cysteine 320-cysteine 329, cysteine 332-cysteine 346, cysteine 349-cysteine 360, cysteine 351-cysteine 371, cysteine 374-cysteine 383, cysteine 386-cysteine 397, cysteine 400-cysteine 415, cysteine 402-cysteine 422, cysteine 425-cysteine 434, and cysteine 437-cysteine 449. Laminin EGF-like domains follow at residues 204–253, 254–300, 301–348, 349–399, and 400–451; these read CNCS…LCQP, CDCS…GCLP, CQCN…ECLR, CPCS…ICRK, and CQCH…NCIK. 2 N-linked (GlcNAc...) asparagine glycosylation sites follow: asparagine 205 and asparagine 218. Asparagine 245 carries an N-linked (GlcNAc...) asparagine glycan. An N-linked (GlcNAc...) asparagine glycan is attached at asparagine 267. N-linked (GlcNAc...) asparagine glycosylation occurs at asparagine 305. An N-linked (GlcNAc...) asparagine glycan is attached at asparagine 428. N-linked (GlcNAc...) asparagine glycosylation is found at asparagine 468, asparagine 481, and asparagine 500. Residues 515–535 traverse the membrane as a helical segment; the sequence is IIILTVIIIVVVLLMGFVGAV. The Cytoplasmic segment spans residues 536–602; it reads YMYREYQNRK…LTTPIHNYKA (67 aa).

Its subcellular location is the membrane. The sequence is that of Multiple epidermal growth factor-like domains protein 9 (MEGF9) from Homo sapiens (Human).